The sequence spans 349 residues: Guanine nucleotide-binding protein-like alpha-10 subunit (349 aa).

A G-alpha domain is found at 33–349 (EEIRVLIYGQ…LNITYNSVKN (317 aa)). The interval 36–49 (RVLIYGQKKVGVTT) is G1 motif. The interval 168-176 (DLNFIKLTQ) is G2 motif. Residues 191-200 (IKMIEMGIQT) are G3 motif. Residues 195 to 199 (EMGIQ) and 266 to 269 (NKKD) contribute to the GTP site. Residues 262-269 (IVFFNKKD) are G4 motif. The G5 motif stretch occupies residues 320–325 (NEESEV).

It belongs to the G-alpha family.

This chain is Guanine nucleotide-binding protein-like alpha-10 subunit (gpaJ), found in Dictyostelium discoideum (Social amoeba).